The following is a 493-amino-acid chain: Glutamyl-tRNA(Gln) amidotransferase subunit A (493 aa).

Catalysis depends on charge relay system residues lysine 78 and serine 158. The active-site Acyl-ester intermediate is the serine 182.

This sequence belongs to the amidase family. GatA subfamily. Heterotrimer of A, B and C subunits.

It carries out the reaction L-glutamyl-tRNA(Gln) + L-glutamine + ATP + H2O = L-glutaminyl-tRNA(Gln) + L-glutamate + ADP + phosphate + H(+). In terms of biological role, allows the formation of correctly charged Gln-tRNA(Gln) through the transamidation of misacylated Glu-tRNA(Gln) in organisms which lack glutaminyl-tRNA synthetase. The reaction takes place in the presence of glutamine and ATP through an activated gamma-phospho-Glu-tRNA(Gln). The protein is Glutamyl-tRNA(Gln) amidotransferase subunit A of Methylorubrum populi (strain ATCC BAA-705 / NCIMB 13946 / BJ001) (Methylobacterium populi).